The sequence spans 277 residues: MSRKKEQQLRKYGTLVVLFIFQVQIFGFDVDNRPTTDVCSTHTILPGPKGDDGEKGDRGEVGKQGKVGPKGPKGNKGTVGDVGDQGMLGKIGPIGGKGDKGAKGISGVSGKKGKAGTVCDCGRYRRVVGQLNINVARLNTSIKFVKNVIAGIRETDEKFYYIVKEEKNYREALMHCRDRGGTLAMPKDEVTNALLADYISSSGLFRAFIGLNDMEKEGQFVYADSSPLQNYSNWKDGEPHDSTGHEDCVEMLSTGEWNDSECQVTIYFICEFLKKRK.

The first 27 residues, 1–27, serve as a signal peptide directing secretion; the sequence is MSRKKEQQLRKYGTLVVLFIFQVQIFG. Positions 41-82 are disordered; sequence THTILPGPKGDDGEKGDRGEVGKQGKVGPKGPKGNKGTVGDV. Residues 49–63 show a composition bias toward basic and acidic residues; it reads KGDDGEKGDRGEVGK. One can recognise a Collagen-like domain in the interval 56-115; that stretch reads GDRGEVGKQGKVGPKGPKGNKGTVGDVGDQGMLGKIGPIGGKGDKGAKGISGVSGKKGKA. Low complexity predominate over residues 64–79; sequence QGKVGPKGPKGNKGTV. One can recognise a C-type lectin domain in the interval 155 to 271; it reads TDEKFYYIVK…CQVTIYFICE (117 aa). 2 disulfide bridges follow: C176–C270 and C248–C262. The N-linked (GlcNAc...) asparagine glycan is linked to N258.

Belongs to the COLEC10/COLEC11 family. Widely expressed. Highly expressed in lung. Weakly expressed in larynx, syrinx and cranial air sac. Expressed throughout the lower gastrointestinal tract in increasing levels starting from a faint signal in duodenum and ending with relatively high signals in proctodeum, coprodeum and urodeum. In the upper part of the gastrointestinal tract, expressed in tongue, crop, and mucosa of the crop.

The protein resides in the secreted. It is found in the golgi apparatus. The protein localises to the cytoplasm. Its function is as follows. Lectin that binds to various sugars: galactose &gt; mannose = fucose &gt; N-acetylglucosamine &gt; N-acetylgalactosamine. Acts as a chemoattractant, probably involved in the regulation of cell migration. This is Collectin-10 (COLEC10) from Gallus gallus (Chicken).